A 397-amino-acid polypeptide reads, in one-letter code: Succinate--CoA ligase [ADP-forming] subunit beta (397 aa).

One can recognise an ATP-grasp domain in the interval 9 to 254; sequence KALLKSFGAP…TTEEDEKEIE (246 aa). ATP contacts are provided by residues K46, 53–55, E109, A112, and E117; that span reads GRG. Residues N209 and D223 each coordinate Mg(2+). Residues N274 and 331–333 contribute to the substrate site; that span reads GIM.

It belongs to the succinate/malate CoA ligase beta subunit family. In terms of assembly, heterotetramer of two alpha and two beta subunits. Requires Mg(2+) as cofactor.

The enzyme catalyses succinate + ATP + CoA = succinyl-CoA + ADP + phosphate. The catalysed reaction is GTP + succinate + CoA = succinyl-CoA + GDP + phosphate. The protein operates within carbohydrate metabolism; tricarboxylic acid cycle; succinate from succinyl-CoA (ligase route): step 1/1. Its function is as follows. Succinyl-CoA synthetase functions in the citric acid cycle (TCA), coupling the hydrolysis of succinyl-CoA to the synthesis of either ATP or GTP and thus represents the only step of substrate-level phosphorylation in the TCA. The beta subunit provides nucleotide specificity of the enzyme and binds the substrate succinate, while the binding sites for coenzyme A and phosphate are found in the alpha subunit. The polypeptide is Succinate--CoA ligase [ADP-forming] subunit beta (Mesorhizobium japonicum (strain LMG 29417 / CECT 9101 / MAFF 303099) (Mesorhizobium loti (strain MAFF 303099))).